Reading from the N-terminus, the 435-residue chain is Cell adhesion molecule 2 (435 aa).

A signal peptide spans 1 to 24; that stretch reads MIWKRSAVLRFYSVCGLLLQGSQG. At 25–367 the chain is on the extracellular side; that stretch reads QFPLTQNVTV…ALAGQNGPDH (343 aa). The Ig-like V-type domain maps to 27 to 119; the sequence is PLTQNVTVVE…PVKTSKAYLT (93 aa). N-linked (GlcNAc...) asparagine glycans are attached at residues asparagine 31 and asparagine 51. Disulfide bonds link cysteine 44–cysteine 104, cysteine 146–cysteine 203, and cysteine 248–cysteine 296. Ig-like C2-type domains are found at residues 127–219 and 227–312; these read PQIS…VAMQ and PSVK…YVLI. Asparagine 291 carries N-linked (GlcNAc...) asparagine glycosylation. A helical transmembrane segment spans residues 368–388; sequence ALIGGIVAVVVFVTLCSIFLL. Residues 389–435 lie on the Cytoplasmic side of the membrane; sequence GRYLARHKGTYLTNEAKGAEDAPDADTAIINAEGSQVNAEEKKEYFI. Serine 423 carries the phosphoserine modification.

It belongs to the nectin family.

It is found in the cell membrane. Its subcellular location is the synapse. It localises to the cell projection. The protein resides in the axon. Adhesion molecule that engages in homo- and heterophilic interactions with the other nectin-like family members, leading to cell aggregation. Important for synapse organization, providing regulated trans-synaptic adhesion. Preferentially binds to oligodendrocytes. In terms of biological role, (Microbial infection) Induces cell fusion in neuron infected by a neuropathogenic strain of measles. Interacts with measles hemagglutinin to trigger hyperfusogenic F-mediated membrane fusion and presumably transsynaptic cell-to-cell transmission of the virus. The chain is Cell adhesion molecule 2 (CADM2) from Homo sapiens (Human).